Here is a 186-residue protein sequence, read N- to C-terminus: ATP synthase subunit delta (186 aa).

This sequence belongs to the ATPase delta chain family. F-type ATPases have 2 components, F(1) - the catalytic core - and F(0) - the membrane proton channel. F(1) has five subunits: alpha(3), beta(3), gamma(1), delta(1), epsilon(1). F(0) has three main subunits: a(1), b(2) and c(10-14). The alpha and beta chains form an alternating ring which encloses part of the gamma chain. F(1) is attached to F(0) by a central stalk formed by the gamma and epsilon chains, while a peripheral stalk is formed by the delta and b chains.

Its subcellular location is the cell inner membrane. F(1)F(0) ATP synthase produces ATP from ADP in the presence of a proton or sodium gradient. F-type ATPases consist of two structural domains, F(1) containing the extramembraneous catalytic core and F(0) containing the membrane proton channel, linked together by a central stalk and a peripheral stalk. During catalysis, ATP synthesis in the catalytic domain of F(1) is coupled via a rotary mechanism of the central stalk subunits to proton translocation. Functionally, this protein is part of the stalk that links CF(0) to CF(1). It either transmits conformational changes from CF(0) to CF(1) or is implicated in proton conduction. This chain is ATP synthase subunit delta, found in Nitrobacter winogradskyi (strain ATCC 25391 / DSM 10237 / CIP 104748 / NCIMB 11846 / Nb-255).